Consider the following 677-residue polypeptide: Electrogenic aspartate/glutamate antiporter SLC25A12, mitochondrial (677 aa).

Ala2 is modified (N-acetylalanine). Positions 2–294 (AVKVHTTKRG…TLADIERIAP (293 aa)) are regulatory N-terminal domain. Topologically, residues 2–329 (AVKVHTTKRG…WLQIAESAYR (328 aa)) are mitochondrial intermembrane. EF-hand domains lie at 40–85 (VQRY…SVLC), 86–121 (APDS…TIIH), 122–156 (HHIP…FLQE), and 157–192 (LQLE…IRSH). Ca(2+)-binding residues include Asp65, Thr67, Asp69, Leu71, and Glu76. Positions 295 to 310 (LAEGALPYNLAELQRQ) are linker loop domain. The interval 320–612 (WLQIAESAYR…RWFYIDFGGL (293 aa)) is carrier domain. 3 Solcar repeats span residues 324–416 (AESA…VRDK), 424–508 (IPLP…CKLL), and 516–604 (VGGI…LQRW). A helical transmembrane segment spans residues 330 to 347 (FTLGSVAGAVGATAVYPI). Residues 348–390 (DLVKTRMQNQRGTGSVVGELMYKNSFDCFKKVLRYEGFFGLYR) are Mitochondrial matrix-facing. The chain crosses the membrane as a helical span at residues 391–410 (GLIPQLIGVAPEKAIKLTVN). Residues 411–433 (DFVRDKFTKRDGSIPLPAEILAG) lie on the Mitochondrial intermembrane side of the membrane. Residues 434–447 (GCAGGSQVIFTNPL) form a helical membrane-spanning segment. The Mitochondrial matrix portion of the chain corresponds to 448 to 482 (EIVKIRLQVAGEITTGPRVSALNVLQDLGLFGLYK). A helical membrane pass occupies residues 483–502 (GAKACFLRDIPFSAIYFPVY). At 503–521 (AHCKLLLADENGRVGGINL) the chain is on the mitochondrial intermembrane side. A helical membrane pass occupies residues 522–539 (LTAGALAGVPAASLVTPA). The Mitochondrial matrix portion of the chain corresponds to 540–578 (DVIKTRLQVAARAGQTTYSGVVDCFRKILREEGPSAFWK). A helical transmembrane segment spans residues 579–598 (GTAARVFRSSPQFGVTLVTY). Residues 599 to 677 (ELLQRWFYID…AQPKAAAAAQ (79 aa)) are Mitochondrial intermembrane-facing. A C-terminal domain region spans residues 613 to 677 (KPSGSEPTPK…AQPKAAAAAQ (65 aa)).

This sequence belongs to the mitochondrial carrier (TC 2.A.29) family. In terms of assembly, homodimer (via N-terminus).

Its subcellular location is the mitochondrion inner membrane. It catalyses the reaction L-aspartate(in) + L-glutamate(out) + H(+)(out) = L-aspartate(out) + L-glutamate(in) + H(+)(in). It carries out the reaction 3-sulfino-L-alanine(out) + L-glutamate(in) + H(+)(in) = 3-sulfino-L-alanine(in) + L-glutamate(out) + H(+)(out). The enzyme catalyses 3-sulfino-L-alanine(out) + L-aspartate(in) = 3-sulfino-L-alanine(in) + L-aspartate(out). In terms of biological role, mitochondrial electrogenic aspartate/glutamate antiporter that favors efflux of aspartate and entry of glutamate and proton within the mitochondria as part of the malate-aspartate shuttle. Also mediates the uptake of L-cysteinesulfinate (3-sulfino-L-alanine) by mitochondria in exchange of L-glutamate and proton. Can also exchange L-cysteinesulfinate with aspartate in their anionic form without any proton translocation. Lacks transport activity towards L-glutamine or gamma-aminobutyric acid (GABA). In Mus musculus (Mouse), this protein is Electrogenic aspartate/glutamate antiporter SLC25A12, mitochondrial.